The following is a 171-amino-acid chain: 3-hydroxydecanoyl-[acyl-carrier-protein] dehydratase (171 aa).

The active site involves H70.

The protein belongs to the thioester dehydratase family. FabA subfamily. In terms of assembly, homodimer.

Its subcellular location is the cytoplasm. It catalyses the reaction a (3R)-hydroxyacyl-[ACP] = a (2E)-enoyl-[ACP] + H2O. It carries out the reaction (3R)-hydroxydecanoyl-[ACP] = (2E)-decenoyl-[ACP] + H2O. The catalysed reaction is (2E)-decenoyl-[ACP] = (3Z)-decenoyl-[ACP]. It functions in the pathway lipid metabolism; fatty acid biosynthesis. Necessary for the introduction of cis unsaturation into fatty acids. Catalyzes the dehydration of (3R)-3-hydroxydecanoyl-ACP to E-(2)-decenoyl-ACP and then its isomerization to Z-(3)-decenoyl-ACP. Can catalyze the dehydratase reaction for beta-hydroxyacyl-ACPs with saturated chain lengths up to 16:0, being most active on intermediate chain length. This chain is 3-hydroxydecanoyl-[acyl-carrier-protein] dehydratase, found in Shewanella woodyi (strain ATCC 51908 / MS32).